The primary structure comprises 422 residues: uncharacterized protein (422 aa).

S124, S126, and S151 each carry phosphoserine. The disordered stretch occupies residues 144–166; it reads TNSLNHDSPPSTPPRRPDTSTSK. K250 is covalently cross-linked (Glycyl lysine isopeptide (Lys-Gly) (interchain with G-Cter in SUMO2)). Disordered stretches follow at residues 251-285 and 299-324; these read ADTT…NDSS and GRGP…ATTA. Residues 271–282 show a composition bias toward acidic residues; the sequence is ETDEDLAWDSDN. Phosphoserine occurs at positions 280 and 306. Positions 310–324 are enriched in low complexity; that stretch reads ALTVKAKATSSATTA. S351 carries the phosphoserine modification.

This is an uncharacterized protein from Homo sapiens (Human).